Reading from the N-terminus, the 883-residue chain is Phosphoenolpyruvate carboxylase (883 aa).

Active-site residues include histidine 138 and lysine 546.

This sequence belongs to the PEPCase type 1 family. Mg(2+) serves as cofactor.

It carries out the reaction oxaloacetate + phosphate = phosphoenolpyruvate + hydrogencarbonate. Functionally, forms oxaloacetate, a four-carbon dicarboxylic acid source for the tricarboxylic acid cycle. This chain is Phosphoenolpyruvate carboxylase, found in Escherichia coli O127:H6 (strain E2348/69 / EPEC).